The sequence spans 156 residues: Large ribosomal subunit protein uL22 (156 aa).

This sequence belongs to the universal ribosomal protein uL22 family. In terms of assembly, part of the 50S ribosomal subunit.

This protein binds specifically to 23S rRNA. It makes multiple contacts with different domains of the 23S rRNA in the assembled 50S subunit and ribosome. Functionally, the globular domain of the protein is located near the polypeptide exit tunnel on the outside of the subunit, while an extended beta-hairpin is found that lines the wall of the exit tunnel in the center of the 70S ribosome. The sequence is that of Large ribosomal subunit protein uL22 from Methanocaldococcus jannaschii (strain ATCC 43067 / DSM 2661 / JAL-1 / JCM 10045 / NBRC 100440) (Methanococcus jannaschii).